A 350-amino-acid chain; its full sequence is Histidinol-phosphate aminotransferase (350 aa).

Lys212 carries the N6-(pyridoxal phosphate)lysine modification.

This sequence belongs to the class-II pyridoxal-phosphate-dependent aminotransferase family. Histidinol-phosphate aminotransferase subfamily. As to quaternary structure, homodimer. The cofactor is pyridoxal 5'-phosphate.

It carries out the reaction L-histidinol phosphate + 2-oxoglutarate = 3-(imidazol-4-yl)-2-oxopropyl phosphate + L-glutamate. The protein operates within amino-acid biosynthesis; L-histidine biosynthesis; L-histidine from 5-phospho-alpha-D-ribose 1-diphosphate: step 7/9. In Geobacter sulfurreducens (strain ATCC 51573 / DSM 12127 / PCA), this protein is Histidinol-phosphate aminotransferase.